We begin with the raw amino-acid sequence, 209 residues long: Peroxynitrite isomerase 2 (209 aa).

The GXWXGXG signature appears at 56–62 (GVWRGEG). 2 residues coordinate heme b: Lys-172 and His-199.

Belongs to the nitrobindin family. As to quaternary structure, homodimer. Heme b is required as a cofactor.

It carries out the reaction peroxynitrite = nitrate. It participates in nitrogen metabolism. Heme-binding protein able to scavenge peroxynitrite and to protect free L-tyrosine against peroxynitrite-mediated nitration, by acting as a peroxynitrite isomerase that converts peroxynitrite to nitrate. Therefore, this protein likely plays a role in peroxynitrite sensing and in the detoxification of reactive nitrogen and oxygen species (RNS and ROS, respectively). Is able to bind nitric oxide (NO) in vitro, but may act as a sensor of peroxynitrite levels in vivo. The polypeptide is Peroxynitrite isomerase 2 (Mycolicibacterium gilvum (strain PYR-GCK) (Mycobacterium gilvum (strain PYR-GCK))).